A 960-amino-acid chain; its full sequence is UvrABC system protein A (960 aa).

35–42 provides a ligand contact to ATP; that stretch reads GLSGSGKS. The segment at 270-297 adopts a C4-type zinc-finger fold; the sequence is CAHCNVSVPELQPRLFSFNAPFGACPSC. 2 consecutive ABC transporter domains span residues 327–605 and 625–953; these read FKPE…QASL and GNGN…WYIK. ATP is bound at residue 657-664; sequence GVSGSGKS. A C4-type zinc finger spans residues 756–782; it reads CEHCKGDGVITIEMNFLPDVYITCDVC.

It belongs to the ABC transporter superfamily. UvrA family. In terms of assembly, forms a heterotetramer with UvrB during the search for lesions.

It is found in the cytoplasm. In terms of biological role, the UvrABC repair system catalyzes the recognition and processing of DNA lesions. UvrA is an ATPase and a DNA-binding protein. A damage recognition complex composed of 2 UvrA and 2 UvrB subunits scans DNA for abnormalities. When the presence of a lesion has been verified by UvrB, the UvrA molecules dissociate. The chain is UvrABC system protein A from Treponema pallidum (strain Nichols).